Reading from the N-terminus, the 714-residue chain is Fatty acid oxidation complex subunit alpha (714 aa).

Residues 1 to 190 (MEMASVFTLN…KLGLVDDVVP (190 aa)) are enoyl-CoA hydratase. The 3-hydroxyacyl-CoA dehydrogenase stretch occupies residues 306–714 (APLNSVGILG…FWKTTATDLQ (409 aa)).

In the N-terminal section; belongs to the enoyl-CoA hydratase/isomerase family. This sequence in the central section; belongs to the 3-hydroxyacyl-CoA dehydrogenase family. As to quaternary structure, heterotetramer of two alpha chains (FadJ) and two beta chains (FadI).

The protein resides in the cytoplasm. The enzyme catalyses a (3S)-3-hydroxyacyl-CoA = a (2E)-enoyl-CoA + H2O. It catalyses the reaction a 4-saturated-(3S)-3-hydroxyacyl-CoA = a (3E)-enoyl-CoA + H2O. It carries out the reaction a (3S)-3-hydroxyacyl-CoA + NAD(+) = a 3-oxoacyl-CoA + NADH + H(+). The catalysed reaction is (3S)-3-hydroxybutanoyl-CoA = (3R)-3-hydroxybutanoyl-CoA. Its pathway is lipid metabolism; fatty acid beta-oxidation. In terms of biological role, catalyzes the formation of a hydroxyacyl-CoA by addition of water on enoyl-CoA. Also exhibits 3-hydroxyacyl-CoA epimerase and 3-hydroxyacyl-CoA dehydrogenase activities. The polypeptide is Fatty acid oxidation complex subunit alpha (Escherichia coli O139:H28 (strain E24377A / ETEC)).